Consider the following 705-residue polypeptide: Elongation factor G (705 aa).

In terms of domain architecture, tr-type G spans 8–290; that stretch reads ERYRNFGIMA…GVVHLLPSPA (283 aa). GTP-binding positions include 17–24, 88–92, and 142–145; these read AHIDAGKT, DTPGH, and NKMD. Positions 290-309 are disordered; the sequence is ADRPPVQGIDEDEKEDTRAA.

The protein belongs to the TRAFAC class translation factor GTPase superfamily. Classic translation factor GTPase family. EF-G/EF-2 subfamily.

Its subcellular location is the cytoplasm. Catalyzes the GTP-dependent ribosomal translocation step during translation elongation. During this step, the ribosome changes from the pre-translocational (PRE) to the post-translocational (POST) state as the newly formed A-site-bound peptidyl-tRNA and P-site-bound deacylated tRNA move to the P and E sites, respectively. Catalyzes the coordinated movement of the two tRNA molecules, the mRNA and conformational changes in the ribosome. The chain is Elongation factor G from Xanthomonas oryzae pv. oryzae (strain MAFF 311018).